We begin with the raw amino-acid sequence, 149 residues long: Large ribosomal subunit protein bL9 (149 aa).

Belongs to the bacterial ribosomal protein bL9 family.

Its function is as follows. Binds to the 23S rRNA. The chain is Large ribosomal subunit protein bL9 from Geobacillus thermodenitrificans (strain NG80-2).